The following is a 476-amino-acid chain: Neuropeptide-like precursor 1 (476 aa).

Residues 1–34 form the signal peptide; that stretch reads MNDAGASIGRHRGCLLLFVALAVAFSSYVEQVES. Valine amide is present on Val-133. Propeptides lie at residues 160-232 and 259-476; these read DEAT…NSYF and YVMP…RKNQ. Disordered regions lie at residues 275 to 298 and 360 to 385; these read QNDI…DGEV and PEVE…SHPT. The span at 286–297 shows a compositional bias: acidic residues; that stretch reads DDDDDDDDDDGE.

Neuropeptide-like precursor 1-1: Expressed in antennal lobe (AL), corpora cardiaca (CC), corpora allata (CA) and gnathal ganglion (GNG) (at protein level). Expression in AL detected in all animals, in GNG in most animals, expression in CC and CA in few animals (at protein level). Neuropeptide-like precursor 1-2: Expressed in antennal lobe (AL), corpora cardiaca (CC), corpora allata (CA) and gnathal ganglion (GNG) (at protein level). Expression in AL detected in all animals, in GNG in some animals, expression in CC and CA in few animals (at protein level). Neuropeptide-like precursor 1-3: Not expressed in antennal lobe (AL), corpora cardiaca (CC), corpora allata (CA) and gnathal ganglion (GNG) (at protein level). Neuropeptide-like precursor 1-4: Expressed in antennal lobe (AL) and gnathal ganglion (GNG) (at protein level). Expression in AL detected in most animals, in GNG in some animals (at protein level). Not expressed in CC and CA (at protein level). YRVamide: Expressed in antennal lobe (AL), corpora cardiaca (CC), corpora allata (CA) and gnathal ganglion (GNG) (at protein level). Expression in AL and GNG detected in most animals, expression in CC and CA in few animals (at protein level). Extended YRVamide: Expressed in antennal lobe (AL) and gnathal ganglion (GNG) (at protein level). Expression in AL detected in most animals, in GNG in some animals (at protein level). Not expressed in corpora cardiaca (CC) and corpora allata (CA) (at protein level). Neuropeptide-like precursor 1-6: Expressed in antennal lobe (AL), corpora cardiaca (CC), corpora allata (CA) and gnathal ganglion (GNG) (at protein level). Expression in GNG detected in all animals, expression in AL in most animals, in CC and CA in few animals (at protein level). Neuropeptide-like precursor 1-6(1-11): Expressed in antennal lobe (AL) and gnathal ganglion (GNG) in most animals (at protein level). Not expressed in corpora cardiaca (CC) and corpora allata (CA) (at protein level). Neuropeptide-like precursor 1-9: Expressed in antennal lobe (AL) and gnathal ganglion (GNG) (at protein level). Expression in AL detected in all animals in GNG in most (at protein level). Not expressed in corpora cardiaca (CC) and corpora allata (CA) (at protein level).

Its subcellular location is the secreted. This is Neuropeptide-like precursor 1 from Agrotis ipsilon (Black cutworm moth).